We begin with the raw amino-acid sequence, 95 residues long: SMAD5 antisense gene protein 1 (95 aa).

Disordered regions lie at residues M1 to S24 and S43 to N70. The span at L7 to Q19 shows a compositional bias: pro residues.

In terms of tissue distribution, expressed in fetal tissues.

This is SMAD5 antisense gene protein 1 (SMAD5-AS1) from Homo sapiens (Human).